Reading from the N-terminus, the 445-residue chain is MVKRQTDTIFALSTAQGKSGVAVIRISGPSSMEALRLLGVKDDISPRVAHCRLLHDSKGRLIDQAVVLYFPKPGSFTGEDVVELQVHGSRAVIRLLYEELQTFIRIAEPGEFSLRAYLNGKIDLTRAEGIADLINAETDAQLRQALAQSTGKLEKQYDQWRSILLDILTDLEACIDFPEDVDSSCVLGGIYNNIEKLCAVLGQYLNDGHRGERLRSGVRVVILGPPNAGKSTLFNSIARRNAAIVSEHPGTTRDVLEVAIDIGGYPYIVLDTAGIRESCDGIEQEGIKRAKMAAEEADIKIVMYPYETTSMQGIDPICDLQDEKTILVLSKADNVDLPESKCIDGKEFHLISVHQDRGIGKLLTLIQEKSRDSFPQEGDVFITSQRHRSHLQKALQVVDAVSKVMPIEIVAEHLRIAAYELGRVTGAVSGDDILDDIFSKFCIGK.

Residues Arg-25, Glu-83, and Lys-121 each coordinate (6S)-5-formyl-5,6,7,8-tetrahydrofolate. Residues Gly-217 to Arg-371 enclose the TrmE-type G domain. Residues Asn-227 to Thr-232, Ser-246 to Thr-252, and Asp-271 to Gly-274 each bind GTP. Ser-231 and Thr-252 together coordinate Mg(2+). A (6S)-5-formyl-5,6,7,8-tetrahydrofolate-binding site is contributed by Lys-445.

The protein belongs to the TRAFAC class TrmE-Era-EngA-EngB-Septin-like GTPase superfamily. TrmE GTPase family. As to quaternary structure, homodimer. Heterotetramer of two MnmE and two MnmG subunits. It depends on K(+) as a cofactor.

It localises to the cytoplasm. In terms of biological role, exhibits a very high intrinsic GTPase hydrolysis rate. Involved in the addition of a carboxymethylaminomethyl (cmnm) group at the wobble position (U34) of certain tRNAs, forming tRNA-cmnm(5)s(2)U34. This is tRNA modification GTPase MnmE from Anaplasma phagocytophilum (strain HZ).